A 421-amino-acid polypeptide reads, in one-letter code: F-box only protein 5 (421 aa).

Serine 85 bears the Phosphoserine mark. Residues 114–219 (ELEASRLYED…IGKKMGLEHL (106 aa)) form an interaction with EVI5 region. The F-box domain occupies 223 to 273 (AELSRRGFVHLLANILTKLSGMDLVNLSKVSRIWKKILENNKGAFQLYSKT). Positions 236–313 (NILTKLSGMD…KSSTWAPPKK (78 aa)) are sufficient for interaction with RPS6KA2; Prevents association of CDC20 with RPS6KA2. Residues 236 to 383 (NILTKLSGMD…SCQFEYCTKC (148 aa)) form a requires for efficient binding to CDC20 region. Residues 280 to 421 (SSKLSLHATT…KKSKKNLQRL (142 aa)) are inhibits APC ubiquitin ligase activity. The tract at residues 296–299 (RAAL) is competitively blocks access of APC substrates to the D-box coreceptor formed by FZR1 and ANAPC10. The ZBR-type zinc finger occupies 348–396 (SLKACVRCNFPAKYDHYLERAVCKRESCQFEYCTKCLCAYHNNKDCLNG). Zn(2+) contacts are provided by cysteine 352, cysteine 355, cysteine 370, cysteine 375, cysteine 380, cysteine 383, histidine 388, and cysteine 393. The tract at residues 352–394 (CVRCNFPAKYDHYLERAVCKRESCQFEYCTKCLCAYHNNKDCL) is allows a rapid multiple mono-ubiquitination of the APC substrate, but strongly inhibits the slow ubiquitin chain elongation catalyzed by UBCH10. Positions 411 to 421 (TKKSKKNLQRL) are sufficient to suppress UBE2S activity; essential for interaction with UBE2S; competitively inhibits the rapide ubiquitin chain elongation by UBE2D1 which blocks UBE2D1 with APC; indispensable for recruitment and position of FBXO5 to the catalytic site of APC; abrogates the inhibition of ubiquitin chain assembly primarily catalyzed by UBE2S; inhibits the ubiquitination by either UBE2C or UBE2D1.

As to quaternary structure, part of a SCF (SKP1-cullin-F-box) protein ligase complex. Interacts with BTRC; mediates proteolysis by the SCF ubiquitin ligase complex leading to activation of APC in late mitosis and subsequent mitotic progression. Interacts with FZR1/CDH1 and the N-terminal substrate-binding domain of CDC20; prevents APC activation. Also interacts with EVI5 which blocks its phosphorylation by PLK1 and prevents its subsequent binding to BTRC and degradation. Interacts simultaneously with anaphase promoting complex (APC), through at least ANAPC2, CDC23, CDC27, the APC substrate GMNN and the APC activator FZR1. Interacts with UBE2S; interferes with the activity of UBE2S mainly by disrupting the dynamic electrostatic association between the C-terminal tail of UBE2S and ANAPC2. Interacts with RPS6KA2; cooperates to induce the metaphase arrest of early blastomeres; increases and stabilizes interaction of FBXO5 with CDC20. In terms of processing, phosphorylation by CDK2 and subsequently by PLK1 triggers degradation during early mitosis through ubiquitin-mediated proteolysis by the SCF ubiquitin ligase complex containing the F-box protein BTRC. This degradation is necessary for the activation of APC in late mitosis and subsequent mitotic progression. Phosphorylated by RPS6KA2; increases and stabilizes interaction with CDC20. Post-translationally, ubiquitinated by the SCF(BTRC) complex following phosphorylation by PLK1. Undergoes both 'Lys-11' and 'Lys-48'-linked polyubiquitination by APC-FZR1 complex leading to degradation during G1 phase by the proteasome. Degraded through the SCF(BTRC) complex; degradation occurs during oocyte maturation, between germinal vesicle breakdown (GVBD) and meiosis I, and is required for the meiosis I-meiosis II transition. In terms of tissue distribution, expressed in oocytes and granulosa cells. Expressed in proliferating cells compartments in hair follicle and skin epidermis, spermatogonia, and intestinal crypts.

It localises to the nucleus. The protein localises to the cytoplasm. It is found in the cytoskeleton. The protein resides in the spindle. Its pathway is protein modification; protein ubiquitination. Its function is as follows. Regulator of APC activity during mitotic and meiotic cell cycle. During mitotic cell cycle plays a role as both substrate and inhibitor of APC-FZR1 complex. During G1 phase, plays a role as substrate of APC-FZR1 complex E3 ligase. Then switches as an inhibitor of APC-FZR1 complex during S and G2 leading to cell-cycle commitment. As APC inhibitor, prevents the degradation of APC substrates at multiple levels: by interacting with APC and blocking access of APC substrates to the D-box co-receptor, formed by FZR1 and ANAPC10; by suppressing ubiquitin ligation and chain elongation by APC by preventing the UBE2C and UBE2S activities. Plays a role in genome integrity preservation by coordinating DNA replication with mitosis through APC inhibition in interphase to stabilize CCNA2 and GMNN in order to promote mitosis and prevent rereplication and DNA damage-induced cellular senescence. During oocyte maturation, plays a role in meiosis through inactivation of APC-FZR1 complex. Inhibits APC through RPS6KA2 interaction that increases FBXO5 affiniy for CDC20 leading to the metaphase arrest of the second meiotic division before fertilization. Controls entry into the first meiotic division through inactivation of APC-FZR1 complex. Promotes migration and osteogenic differentiation of mesenchymal stem cells. The protein is F-box only protein 5 of Mus musculus (Mouse).